A 124-amino-acid polypeptide reads, in one-letter code: Holo-[acyl-carrier-protein] synthase (124 aa).

Mg(2+) contacts are provided by Asp-8 and Glu-55.

The protein belongs to the P-Pant transferase superfamily. AcpS family. Mg(2+) is required as a cofactor.

Its subcellular location is the cytoplasm. The enzyme catalyses apo-[ACP] + CoA = holo-[ACP] + adenosine 3',5'-bisphosphate + H(+). Its function is as follows. Transfers the 4'-phosphopantetheine moiety from coenzyme A to a Ser of acyl-carrier-protein. The sequence is that of Holo-[acyl-carrier-protein] synthase from Desulfovibrio desulfuricans (strain ATCC 27774 / DSM 6949 / MB).